The following is a 158-amino-acid chain: S-ribosylhomocysteine lyase (158 aa).

Positions 54, 58, and 124 each coordinate Fe cation.

Belongs to the LuxS family. As to quaternary structure, homodimer. Fe cation serves as cofactor.

The enzyme catalyses S-(5-deoxy-D-ribos-5-yl)-L-homocysteine = (S)-4,5-dihydroxypentane-2,3-dione + L-homocysteine. Its function is as follows. Involved in the synthesis of autoinducer 2 (AI-2) which is secreted by bacteria and is used to communicate both the cell density and the metabolic potential of the environment. The regulation of gene expression in response to changes in cell density is called quorum sensing. Catalyzes the transformation of S-ribosylhomocysteine (RHC) to homocysteine (HC) and 4,5-dihydroxy-2,3-pentadione (DPD). This Lactobacillus johnsonii (strain CNCM I-12250 / La1 / NCC 533) protein is S-ribosylhomocysteine lyase.